Consider the following 364-residue polypeptide: tRNA 2-selenouridine synthase (364 aa).

In terms of domain architecture, Rhodanese spans 14–137 (LLADTPLIDV…LRQTAIQATW (124 aa)). Residue C97 is the S-selanylcysteine intermediate of the active site.

This sequence belongs to the SelU family. In terms of assembly, monomer.

It catalyses the reaction 5-methylaminomethyl-2-thiouridine(34) in tRNA + selenophosphate + (2E)-geranyl diphosphate + H2O + H(+) = 5-methylaminomethyl-2-selenouridine(34) in tRNA + (2E)-thiogeraniol + phosphate + diphosphate. The enzyme catalyses 5-methylaminomethyl-2-thiouridine(34) in tRNA + (2E)-geranyl diphosphate = 5-methylaminomethyl-S-(2E)-geranyl-thiouridine(34) in tRNA + diphosphate. It carries out the reaction 5-methylaminomethyl-S-(2E)-geranyl-thiouridine(34) in tRNA + selenophosphate + H(+) = 5-methylaminomethyl-2-(Se-phospho)selenouridine(34) in tRNA + (2E)-thiogeraniol. The catalysed reaction is 5-methylaminomethyl-2-(Se-phospho)selenouridine(34) in tRNA + H2O = 5-methylaminomethyl-2-selenouridine(34) in tRNA + phosphate. Functionally, involved in the post-transcriptional modification of the uridine at the wobble position (U34) of tRNA(Lys), tRNA(Glu) and tRNA(Gln). Catalyzes the conversion of 2-thiouridine (S2U-RNA) to 2-selenouridine (Se2U-RNA). Acts in a two-step process involving geranylation of 2-thiouridine (S2U) to S-geranyl-2-thiouridine (geS2U) and subsequent selenation of the latter derivative to 2-selenouridine (Se2U) in the tRNA chain. This is tRNA 2-selenouridine synthase from Salmonella choleraesuis (strain SC-B67).